The primary structure comprises 311 residues: CD-NTase-associated protein 6 (311 aa).

ATP-binding positions include 84-89 and 215-216; these read GSGKTE and RR.

It belongs to the AAA ATPase family. Homohexamer. Forms a 1:1:6 CdnC:Cap7:Cap6 complex.

In terms of biological role, regulates complex assembly in a CBASS antivirus system. CBASS (cyclic oligonucleotide-based antiphage signaling system) provides immunity against bacteriophage. The CD-NTase protein synthesizes cyclic nucleotides in response to infection; these serve as specific second messenger signals. The signals activate a diverse range of effectors, leading to bacterial cell death and thus abortive phage infection. A type III-C(AAA) CBASS system. Binds and disassembles an active CdnC:Cap7 (Cap7 is also called HORMA) complex, inhibiting the complex's ability to synthesize cyclic nucleotide second messengers. An AAA+-ATPase remodeler, in the absence of foreign threat Cap6 (also called Trip13) probably maintains the Cap7 protein in its open, inactive state. Once activated (presumably by a bacteriophage protein) Cap7 binds to and activates its cognate CD-NTase (CdnC in this bacteria) to synthesize cAAA, a cyclic nucleotide second messenger. cAAA activates the NucC endonuclease which degrades all DNA in the infected cell, causing cell death and abortive phage infection. Its function is as follows. Protects E.coli strain JP313 against bacteriophage lambda cI- infection. When the cdnC-cap7-cap6-nucC operon is transformed into a susceptible E.coli strain it confers bacteriophage lambda cI- immunity. Mutations in the sensor (Cap7 also called HORMA) or effector proteins (CdnC, NucC) but not the disassembly protein (Cap6 also called Trip13) no longer confer immunity. The presence of the intact operon leads to culture collapse and cell death, which occurs before the phage has finished its replication cycle, thus protecting non-infected bacteria by aborting the phage infection and preventing its propagation. The polypeptide is CD-NTase-associated protein 6 (Escherichia coli (strain MS 115-1)).